Consider the following 666-residue polypeptide: UvrABC system protein B (666 aa).

The Helicase ATP-binding domain occupies 25-412 (NGIKNNNKWQ…SENIAEQVIR (388 aa)). 38–45 (GVTGSGKT) lines the ATP pocket. Positions 91–114 (YYDYYQPEAYVAQTDTYIEKDASI) match the Beta-hairpin motif. In terms of domain architecture, Helicase C-terminal spans 429–595 (QIDDLYSEIK…TIKKAVRDVI (167 aa)). The region spanning 622–657 (DKLIKEFEKEMKEAAKELQFEKAAYFRDKVNELKKK) is the UVR domain.

This sequence belongs to the UvrB family. Forms a heterotetramer with UvrA during the search for lesions. Interacts with UvrC in an incision complex.

Its subcellular location is the cytoplasm. Its function is as follows. The UvrABC repair system catalyzes the recognition and processing of DNA lesions. A damage recognition complex composed of 2 UvrA and 2 UvrB subunits scans DNA for abnormalities. Upon binding of the UvrA(2)B(2) complex to a putative damaged site, the DNA wraps around one UvrB monomer. DNA wrap is dependent on ATP binding by UvrB and probably causes local melting of the DNA helix, facilitating insertion of UvrB beta-hairpin between the DNA strands. Then UvrB probes one DNA strand for the presence of a lesion. If a lesion is found the UvrA subunits dissociate and the UvrB-DNA preincision complex is formed. This complex is subsequently bound by UvrC and the second UvrB is released. If no lesion is found, the DNA wraps around the other UvrB subunit that will check the other stand for damage. This Clostridium acetobutylicum (strain ATCC 824 / DSM 792 / JCM 1419 / IAM 19013 / LMG 5710 / NBRC 13948 / NRRL B-527 / VKM B-1787 / 2291 / W) protein is UvrABC system protein B.